The sequence spans 823 residues: Valine--tRNA ligase (823 aa).

Position 547 (lysine 547) interacts with ATP.

Belongs to the class-I aminoacyl-tRNA synthetase family. ValS type 2 subfamily.

The protein resides in the cytoplasm. It carries out the reaction tRNA(Val) + L-valine + ATP = L-valyl-tRNA(Val) + AMP + diphosphate. Functionally, catalyzes the attachment of valine to tRNA(Val). As ValRS can inadvertently accommodate and process structurally similar amino acids such as threonine, to avoid such errors, it has a 'posttransfer' editing activity that hydrolyzes mischarged Thr-tRNA(Val) in a tRNA-dependent manner. This chain is Valine--tRNA ligase (valS), found in Aeropyrum pernix (strain ATCC 700893 / DSM 11879 / JCM 9820 / NBRC 100138 / K1).